The following is a 149-amino-acid chain: Secreted RxLR effector protein 17 (149 aa).

An N-terminal signal peptide occupies residues 1–24 (MRLFYFSAMSVIGLLARNNMVVVA). Positions 52-78 (RSLRTREKDIQDSTVAKDDAIKVEEDR) match the RxLR-dEER motif.

This sequence belongs to the RxLR effector family.

It localises to the secreted. The protein localises to the host cytoplasm. It is found in the host nucleus. Its function is as follows. Effector that acts as a broad suppressor of cell death to interrupt plant immunity. Inhibits cell death induced by cell death-inducing proteins, including the PAMP elicitor INF1 from P.infestans. The chain is Secreted RxLR effector protein 17 from Plasmopara viticola (Downy mildew of grapevine).